A 365-amino-acid chain; its full sequence is tRNA 2-selenouridine synthase (365 aa).

The 123-residue stretch at 16-138 (FLLKTPLIDL…LRRYLINVID (123 aa)) folds into the Rhodanese domain. The active-site S-selanylcysteine intermediate is the C98.

This sequence belongs to the SelU family. Monomer.

The enzyme catalyses 5-methylaminomethyl-2-thiouridine(34) in tRNA + selenophosphate + (2E)-geranyl diphosphate + H2O + H(+) = 5-methylaminomethyl-2-selenouridine(34) in tRNA + (2E)-thiogeraniol + phosphate + diphosphate. It catalyses the reaction 5-methylaminomethyl-2-thiouridine(34) in tRNA + (2E)-geranyl diphosphate = 5-methylaminomethyl-S-(2E)-geranyl-thiouridine(34) in tRNA + diphosphate. The catalysed reaction is 5-methylaminomethyl-S-(2E)-geranyl-thiouridine(34) in tRNA + selenophosphate + H(+) = 5-methylaminomethyl-2-(Se-phospho)selenouridine(34) in tRNA + (2E)-thiogeraniol. It carries out the reaction 5-methylaminomethyl-2-(Se-phospho)selenouridine(34) in tRNA + H2O = 5-methylaminomethyl-2-selenouridine(34) in tRNA + phosphate. Functionally, involved in the post-transcriptional modification of the uridine at the wobble position (U34) of tRNA(Lys), tRNA(Glu) and tRNA(Gln). Catalyzes the conversion of 2-thiouridine (S2U-RNA) to 2-selenouridine (Se2U-RNA). Acts in a two-step process involving geranylation of 2-thiouridine (S2U) to S-geranyl-2-thiouridine (geS2U) and subsequent selenation of the latter derivative to 2-selenouridine (Se2U) in the tRNA chain. This is tRNA 2-selenouridine synthase from Psychromonas ingrahamii (strain DSM 17664 / CCUG 51855 / 37).